Here is a 143-residue protein sequence, read N- to C-terminus: Small ribosomal subunit protein uS11c (143 aa).

The protein belongs to the universal ribosomal protein uS11 family. As to quaternary structure, part of the 30S ribosomal subunit.

The protein resides in the plastid. It localises to the chloroplast. This Hordeum vulgare (Barley) protein is Small ribosomal subunit protein uS11c.